Consider the following 164-residue polypeptide: Decoration protein (164 aa).

A binding to the capsid hexamer region spans residues 1–72; sequence MIDYSGLRTI…AIPPAPPAPP (72 aa). The region spanning 71–164 is the Ig-like domain; that stretch reads PPLTLSKDLT…VTVNPTVPGG (94 aa).

In terms of assembly, interacts with the major capsid protein; each hexon binds a single copy of the decoration protein.

The protein localises to the virion. Its function is as follows. Decoration protein that binds asymmetrically to the center of each capsid protein hexamer after capsid expansion. Stabilizes the capsid and protects from DNA release. The polypeptide is Decoration protein (Escherichia phage T5 (Enterobacteria phage T5)).